The following is a 521-amino-acid chain: tRNA (adenine(58)-N(1))-methyltransferase non-catalytic subunit trm6 (521 aa).

3 disordered regions span residues 1–24 (METETPMDVETKSTTSNTNDNNNN), 305–336 (IYDKQVKEKEKEKEKDENVKDEKESGEEAKTI), and 452–521 (QKST…KIDE). Over residues 12–24 (KSTTSNTNDNNNN) the composition is skewed to low complexity. Residues 308 to 334 (KQVKEKEKEKEKDENVKDEKESGEEAK) show a composition bias toward basic and acidic residues. Low complexity-rich tracts occupy residues 452–476 (QKSTTTTTTTTTTTTNNSINPTKTT) and 487–502 (DATTSSSSSSTAAATT). The segment covering 510-521 (SESALKKRKIDE) has biased composition (basic and acidic residues).

The protein belongs to the TRM6/GCD10 family. As to quaternary structure, heterotetramer; composed of two copies of trmt6 and two copies of trmt61a.

It localises to the nucleus. Functionally, substrate-binding subunit of tRNA (adenine-N(1)-)-methyltransferase, which catalyzes the formation of N(1)-methyladenine at position 58 (m1A58) in initiator methionyl-tRNA. This is tRNA (adenine(58)-N(1))-methyltransferase non-catalytic subunit trm6 (trmt6) from Dictyostelium discoideum (Social amoeba).